The sequence spans 301 residues: Glycosyltransferase GlyG (301 aa).

The protein belongs to the glycosyltransferase 2 family.

The protein operates within protein modification; protein glycosylation. Functionally, involved in the polymorphic O-glycosylation of the serine-rich repeat protein PsrP. Catalyzes the third step in glycosylation PsrP in this bacteria. Transfers glucose from UDP-glucose to the terminal glucose moiety of already-glycosylated PsrP (using truncated substrates with PsrP SSR1-GlcNAc-Glc). Has a marked preference for PsrP substrate that has already been modified by GlcNAc and glucose. In vitro has hydrolytic activity against UDP-glucose and to a lesser extent against UDP-galactose. In terms of biological role, also catalyzes the fourth step in glycosylation of the serine-rich repeat protein PsrP in this bacteria. Can transfer the sugar from UDP-glucose (and much less well from UDP-galactose) to the terminal sugar moiety of PsrP-GlcNAc-Glc-Gal or of PsrP-GlcNAc-Glc-Glc. This is Glycosyltransferase GlyG from Streptococcus pneumoniae serotype 4 (strain ATCC BAA-334 / TIGR4).